The sequence spans 259 residues: Protein IQ-DOMAIN 10 (259 aa).

Residues 18–39 form a disordered region; sequence KNKSNRGNVHSETSNRVKPVES. The 28-residue stretch at 50–77 folds into the IQ domain; that stretch reads EVAVIRIQKAFRAFKARKRLCSLKSARR. A calmodulin-binding region spans residues 61-71; it reads RAFKARKRLCS. Residues 226-259 are disordered; it reads KPSKKPEKSSPNNVITKTSAKPDEVGNSKKPGSG.

It belongs to the IQD family. In terms of assembly, binds to multiple calmodulin (CaM) in the presence of Ca(2+) and CaM-like proteins.

It is found in the nucleus. It localises to the cytoplasm. The protein localises to the cytoskeleton. Its function is as follows. May be involved in cooperative interactions with calmodulins or calmodulin-like proteins. Recruits calmodulin proteins to microtubules, thus being a potential scaffold in cellular signaling and trafficking. May associate with nucleic acids and regulate gene expression at the transcriptional or post-transcriptional level. The polypeptide is Protein IQ-DOMAIN 10 (Arabidopsis thaliana (Mouse-ear cress)).